The primary structure comprises 460 residues: Cysteine--tRNA ligase (460 aa).

Position 28 (Cys-28) interacts with Zn(2+). A 'HIGH' region motif is present at residues 30–40; that stretch reads MTVYDYCHLGH. Cys-209, His-234, and Glu-238 together coordinate Zn(2+). The 'KMSKS' region motif lies at 266–270; sequence KMSKS. Lys-269 lines the ATP pocket.

The protein belongs to the class-I aminoacyl-tRNA synthetase family. Monomer. Zn(2+) serves as cofactor.

It is found in the cytoplasm. The catalysed reaction is tRNA(Cys) + L-cysteine + ATP = L-cysteinyl-tRNA(Cys) + AMP + diphosphate. This chain is Cysteine--tRNA ligase, found in Pseudomonas aeruginosa (strain UCBPP-PA14).